A 391-amino-acid polypeptide reads, in one-letter code: 1-deoxy-D-xylulose 5-phosphate reductoisomerase (391 aa).

Positions 17, 18, 19, 20, 47, and 130 each coordinate NADPH. Lys-131 is a binding site for 1-deoxy-D-xylulose 5-phosphate. Glu-132 is an NADPH binding site. Asp-156 lines the Mn(2+) pocket. Residues Ser-157, Glu-158, Ser-182, and His-205 each coordinate 1-deoxy-D-xylulose 5-phosphate. A Mn(2+)-binding site is contributed by Glu-158. NADPH is bound at residue Gly-211. 1-deoxy-D-xylulose 5-phosphate-binding residues include Ser-218, Asn-223, Lys-224, and Glu-227. Glu-227 contacts Mn(2+).

This sequence belongs to the DXR family. The cofactor is Mg(2+). Mn(2+) is required as a cofactor.

It catalyses the reaction 2-C-methyl-D-erythritol 4-phosphate + NADP(+) = 1-deoxy-D-xylulose 5-phosphate + NADPH + H(+). It functions in the pathway isoprenoid biosynthesis; isopentenyl diphosphate biosynthesis via DXP pathway; isopentenyl diphosphate from 1-deoxy-D-xylulose 5-phosphate: step 1/6. Its function is as follows. Catalyzes the NADPH-dependent rearrangement and reduction of 1-deoxy-D-xylulose-5-phosphate (DXP) to 2-C-methyl-D-erythritol 4-phosphate (MEP). In Rhizobium meliloti (strain 1021) (Ensifer meliloti), this protein is 1-deoxy-D-xylulose 5-phosphate reductoisomerase.